Consider the following 74-residue polypeptide: Kappa-stichotoxin-Hmg1a (74 aa).

Residues 1–22 (MKSQMIAAVLLIAFCLCVVVTA) form the signal peptide. The propeptide occupies 23–39 (RMELQDVEDMENGFQKR). The ShKT domain occupies 42 to 74 (CKDLIPVSECTDIRCRTSMKYRLNLCRKTCGSC). Disulfide bonds link Cys42–Cys74, Cys51–Cys67, and Cys56–Cys71.

The protein belongs to the sea anemone type 1 potassium channel toxin family. Type 1a subfamily.

The protein localises to the secreted. It is found in the nematocyst. Its function is as follows. Potently blocks the voltage-gated potassium channel Kv1.1/KCNA1 (Ki=75 pM), KcsA (Ki~1 nM) and moderately blocks Kv1.2/KCNA2 (Ki=2.5 nM) and Kv1.3/KCNA3 (Ki=3.1 nM). Also facilitates acetylcholine release at the avian neuromuscular junction. Blockade and dissociation rate are sensitive to voltage. This Heteractis magnifica (Magnificent sea anemone) protein is Kappa-stichotoxin-Hmg1a.